Reading from the N-terminus, the 153-residue chain is 6,7-dimethyl-8-ribityllumazine synthase (153 aa).

Residues Phe-22, 56 to 58 (AFE), and 80 to 82 (TVI) each bind 5-amino-6-(D-ribitylamino)uracil. 85 to 86 (ST) is a binding site for (2S)-2-hydroxy-3-oxobutyl phosphate. His-88 acts as the Proton donor in catalysis. Phe-113 provides a ligand contact to 5-amino-6-(D-ribitylamino)uracil. (2S)-2-hydroxy-3-oxobutyl phosphate is bound at residue Arg-127.

Belongs to the DMRL synthase family. In terms of assembly, forms an icosahedral capsid composed of 60 subunits, arranged as a dodecamer of pentamers.

The catalysed reaction is (2S)-2-hydroxy-3-oxobutyl phosphate + 5-amino-6-(D-ribitylamino)uracil = 6,7-dimethyl-8-(1-D-ribityl)lumazine + phosphate + 2 H2O + H(+). The protein operates within cofactor biosynthesis; riboflavin biosynthesis; riboflavin from 2-hydroxy-3-oxobutyl phosphate and 5-amino-6-(D-ribitylamino)uracil: step 1/2. Functionally, catalyzes the formation of 6,7-dimethyl-8-ribityllumazine by condensation of 5-amino-6-(D-ribitylamino)uracil with 3,4-dihydroxy-2-butanone 4-phosphate. This is the penultimate step in the biosynthesis of riboflavin. This Actinobacillus pleuropneumoniae serotype 7 (strain AP76) protein is 6,7-dimethyl-8-ribityllumazine synthase.